A 535-amino-acid polypeptide reads, in one-letter code: T-complex protein 1 subunit beta (535 aa).

N-acetylalanine is present on Ala2. Ser3 is modified (phosphoserine). Lys13 is subject to N6-acetyllysine. Residue Gly44 participates in ADP binding. Gly44 serves as a coordination point for ATP. Ser60 is subject to Phosphoserine. Asp97 is a Mg(2+) binding site. Residues Gly98, Thr99, Thr100, and Ser101 each coordinate ADP. Positions 98, 99, and 100 each coordinate ATP. Lys154 carries the post-translational modification N6-acetyllysine. ADP-binding residues include Ser168 and Ser169. Lys181 carries the post-translational modification N6-acetyllysine. Residue Lys248 forms a Glycyl lysine isopeptide (Lys-Gly) (interchain with G-Cter in SUMO2) linkage. A Phosphoserine modification is found at Ser260. At Thr261 the chain carries Phosphothreonine. Residues Gly410, Glu495, and Lys500 each contribute to the ADP site. Glu495 and Lys500 together coordinate ATP.

This sequence belongs to the TCP-1 chaperonin family. In terms of assembly, component of the chaperonin-containing T-complex (TRiC), a hexadecamer composed of two identical back-to-back stacked rings enclosing a protein folding chamber. Each ring is made up of eight different subunits: TCP1/CCT1, CCT2, CCT3, CCT4, CCT5, CCT6A/CCT6, CCT7, CCT8. Interacts with PACRG. Interacts with FLCN. Interacts with DLEC1. Interacts with SVEP1.

Its subcellular location is the cytoplasm. It carries out the reaction ATP + H2O = ADP + phosphate + H(+). Component of the chaperonin-containing T-complex (TRiC), a molecular chaperone complex that assists the folding of actin, tubulin and other proteins upon ATP hydrolysis. The TRiC complex mediates the folding of WRAP53/TCAB1, thereby regulating telomere maintenance. As part of the TRiC complex may play a role in the assembly of BBSome, a complex involved in ciliogenesis regulating transports vesicles to the cilia. This chain is T-complex protein 1 subunit beta (CCT2), found in Bos taurus (Bovine).